The chain runs to 427 residues: 3-phosphoshikimate 1-carboxyvinyltransferase (427 aa).

3-phosphoshikimate contacts are provided by K23, S24, and R28. K23 contributes to the phosphoenolpyruvate binding site. Residues G97 and R125 each coordinate phosphoenolpyruvate. 3-phosphoshikimate contacts are provided by S170, S171, Q172, S198, D314, N337, and K341. Q172 contributes to the phosphoenolpyruvate binding site. D314 functions as the Proton acceptor in the catalytic mechanism. R345, R387, and K412 together coordinate phosphoenolpyruvate.

Belongs to the EPSP synthase family. Monomer.

The protein resides in the cytoplasm. The catalysed reaction is 3-phosphoshikimate + phosphoenolpyruvate = 5-O-(1-carboxyvinyl)-3-phosphoshikimate + phosphate. Its pathway is metabolic intermediate biosynthesis; chorismate biosynthesis; chorismate from D-erythrose 4-phosphate and phosphoenolpyruvate: step 6/7. Catalyzes the transfer of the enolpyruvyl moiety of phosphoenolpyruvate (PEP) to the 5-hydroxyl of shikimate-3-phosphate (S3P) to produce enolpyruvyl shikimate-3-phosphate and inorganic phosphate. The sequence is that of 3-phosphoshikimate 1-carboxyvinyltransferase from Buchnera aphidicola subsp. Acyrthosiphon pisum (strain 5A).